We begin with the raw amino-acid sequence, 347 residues long: Protein RecA (347 aa).

64 to 71 (GPESSGKT) provides a ligand contact to ATP.

Belongs to the RecA family.

The protein localises to the cytoplasm. In terms of biological role, can catalyze the hydrolysis of ATP in the presence of single-stranded DNA, the ATP-dependent uptake of single-stranded DNA by duplex DNA, and the ATP-dependent hybridization of homologous single-stranded DNAs. It interacts with LexA causing its activation and leading to its autocatalytic cleavage. In Bacillus velezensis (strain DSM 23117 / BGSC 10A6 / LMG 26770 / FZB42) (Bacillus amyloliquefaciens subsp. plantarum), this protein is Protein RecA.